A 115-amino-acid polypeptide reads, in one-letter code: T cell receptor beta variable 7-4 (115 aa).

Residues 1-21 (MGTRLLCWVVLGFLGTDHTGA) form the signal peptide. Residues 22 to 115 (GVSQSPRYKV…SAVYLCASSL (94 aa)) form the Ig-like domain. Cys-42 and Cys-111 are oxidised to a cystine. A disordered region spans residues 67–97 (YSQSDAQRDKSGRPSGRFSAERPERSVSTLK).

Alpha-beta TR is a heterodimer composed of an alpha and beta chain; disulfide-linked. The alpha-beta TR is associated with the transmembrane signaling CD3 coreceptor proteins to form the TR-CD3 (TcR or TCR). The assembly of alpha-beta TR heterodimers with CD3 occurs in the endoplasmic reticulum where a single alpha-beta TR heterodimer associates with one CD3D-CD3E heterodimer, one CD3G-CD3E heterodimer and one CD247 homodimer forming a stable octameric structure. CD3D-CD3E and CD3G-CD3E heterodimers preferentially associate with TR alpha and TR beta chains, respectively. The association of the CD247 homodimer is the last step of TcR assembly in the endoplasmic reticulum and is required for transport to the cell surface.

It is found in the cell membrane. Functionally, v region of the variable domain of T cell receptor (TR) beta chain that participates in the antigen recognition. Alpha-beta T cell receptors are antigen specific receptors which are essential to the immune response and are present on the cell surface of T lymphocytes. Recognize peptide-major histocompatibility (MH) (pMH) complexes that are displayed by antigen presenting cells (APC), a prerequisite for efficient T cell adaptive immunity against pathogens. Binding of alpha-beta TR to pMH complex initiates TR-CD3 clustering on the cell surface and intracellular activation of LCK that phosphorylates the ITAM motifs of CD3G, CD3D, CD3E and CD247 enabling the recruitment of ZAP70. In turn ZAP70 phosphorylates LAT, which recruits numerous signaling molecules to form the LAT signalosome. The LAT signalosome propagates signal branching to three major signaling pathways, the calcium, the mitogen-activated protein kinase (MAPK) kinase and the nuclear factor NF-kappa-B (NF-kB) pathways, leading to the mobilization of transcription factors that are critical for gene expression and essential for T cell growth and differentiation. The T cell repertoire is generated in the thymus, by V-(D)-J rearrangement. This repertoire is then shaped by intrathymic selection events to generate a peripheral T cell pool of self-MH restricted, non-autoaggressive T cells. Post-thymic interaction of alpha-beta TR with the pMH complexes shapes TR structural and functional avidity. The protein is T cell receptor beta variable 7-4 of Homo sapiens (Human).